The chain runs to 531 residues: Ribosomal protein uS12 methylthiotransferase RimO (531 aa).

Polar residues-rich tracts occupy residues 1-19 (MPNI…SQPA) and 55-67 (HNQN…SSEV). A disordered region spans residues 1–77 (MPNISTESVN…VSAASAKTTT (77 aa)). The segment covering 68–77 (VSAASAKTTT) has biased composition (low complexity). The region spanning 88-198 (PKIGFVSLGC…VIRAVALHVP (111 aa)) is the MTTase N-terminal domain. Positions 97, 133, 162, 236, 240, and 243 each coordinate [4Fe-4S] cluster. The Radical SAM core domain occupies 222–459 (LTPSHYAYLK…MTLQQDISAQ (238 aa)). One can recognise a TRAM domain in the interval 462–531 (QEKIGKTLMV…EYDLFASYKG (70 aa)).

Belongs to the methylthiotransferase family. RimO subfamily. [4Fe-4S] cluster is required as a cofactor.

The protein localises to the cytoplasm. It carries out the reaction L-aspartate(89)-[ribosomal protein uS12]-hydrogen + (sulfur carrier)-SH + AH2 + 2 S-adenosyl-L-methionine = 3-methylsulfanyl-L-aspartate(89)-[ribosomal protein uS12]-hydrogen + (sulfur carrier)-H + 5'-deoxyadenosine + L-methionine + A + S-adenosyl-L-homocysteine + 2 H(+). Functionally, catalyzes the methylthiolation of an aspartic acid residue of ribosomal protein uS12. This chain is Ribosomal protein uS12 methylthiotransferase RimO, found in Psychrobacter cryohalolentis (strain ATCC BAA-1226 / DSM 17306 / VKM B-2378 / K5).